A 290-amino-acid chain; its full sequence is 4-hydroxy-tetrahydrodipicolinate synthase (290 aa).

Residue T44 coordinates pyruvate. Catalysis depends on Y132, which acts as the Proton donor/acceptor. K160 functions as the Schiff-base intermediate with substrate in the catalytic mechanism. I202 provides a ligand contact to pyruvate.

The protein belongs to the DapA family. As to quaternary structure, homotetramer; dimer of dimers.

Its subcellular location is the cytoplasm. It catalyses the reaction L-aspartate 4-semialdehyde + pyruvate = (2S,4S)-4-hydroxy-2,3,4,5-tetrahydrodipicolinate + H2O + H(+). The protein operates within amino-acid biosynthesis; L-lysine biosynthesis via DAP pathway; (S)-tetrahydrodipicolinate from L-aspartate: step 3/4. Functionally, catalyzes the condensation of (S)-aspartate-beta-semialdehyde [(S)-ASA] and pyruvate to 4-hydroxy-tetrahydrodipicolinate (HTPA). This is 4-hydroxy-tetrahydrodipicolinate synthase from Geobacter sulfurreducens (strain ATCC 51573 / DSM 12127 / PCA).